The following is a 379-amino-acid chain: Cobalt-precorrin-5B C(1)-methyltransferase (379 aa).

This sequence belongs to the CbiD family.

It catalyses the reaction Co-precorrin-5B + S-adenosyl-L-methionine = Co-precorrin-6A + S-adenosyl-L-homocysteine. Its pathway is cofactor biosynthesis; adenosylcobalamin biosynthesis; cob(II)yrinate a,c-diamide from sirohydrochlorin (anaerobic route): step 6/10. In terms of biological role, catalyzes the methylation of C-1 in cobalt-precorrin-5B to form cobalt-precorrin-6A. The protein is Cobalt-precorrin-5B C(1)-methyltransferase of Cyanothece sp. (strain PCC 7425 / ATCC 29141).